The chain runs to 380 residues: Cytochrome b (380 aa).

4 helical membrane passes run 34–54, 78–99, 114–134, and 179–199; these read FGSL…LLAM, WLIR…YLHI, WNTG…GYVL, and FFAL…IHLT. Residues histidine 84 and histidine 98 each contribute to the heme b site. The heme b site is built by histidine 183 and histidine 197. Histidine 202 contacts a ubiquinone. 4 helical membrane-spanning segments follow: residues 227-247, 289-309, 321-341, and 348-368; these read TKDI…ALFS, LGGV…PLLH, LSQL…WIGS, and FIII…ILFP.

This sequence belongs to the cytochrome b family. In terms of assembly, the cytochrome bc1 complex contains 11 subunits: 3 respiratory subunits (MT-CYB, CYC1 and UQCRFS1), 2 core proteins (UQCRC1 and UQCRC2) and 6 low-molecular weight proteins (UQCRH/QCR6, UQCRB/QCR7, UQCRQ/QCR8, UQCR10/QCR9, UQCR11/QCR10 and a cleavage product of UQCRFS1). This cytochrome bc1 complex then forms a dimer. It depends on heme b as a cofactor.

It is found in the mitochondrion inner membrane. Component of the ubiquinol-cytochrome c reductase complex (complex III or cytochrome b-c1 complex) that is part of the mitochondrial respiratory chain. The b-c1 complex mediates electron transfer from ubiquinol to cytochrome c. Contributes to the generation of a proton gradient across the mitochondrial membrane that is then used for ATP synthesis. The sequence is that of Cytochrome b (MT-CYB) from Pygoscelis antarcticus (Chinstrap penguin).